The chain runs to 176 residues: Transmembrane protein 238 (176 aa).

The disordered stretch occupies residues 1–22 (MAAAPAVCASQGSPPGAPSAPA). Topologically, residues 1 to 36 (MAAAPAVCASQGSPPGAPSAPAAAPAPAAGLGRCRM) are cytoplasmic. Positions 9–22 (ASQGSPPGAPSAPA) are enriched in low complexity. A helical transmembrane segment spans residues 37–57 (ALLLAVALDVAGMAALLTGVF). Residues 58–69 (AQLQVRGRDFGD) lie on the Extracellular side of the membrane. A helical membrane pass occupies residues 70–90 (LLIYSGALLVFLSLLGWILWY). At 91–176 (TGNIEISRQE…GPGAAGAGSE (86 aa)) the chain is on the cytoplasmic side. Positions 124–137 (SAPAAAGQRPAPGS) are enriched in low complexity. A disordered region spans residues 124-157 (SAPAAAGQRPAPGSRRARRAARAPPPPAAGSRRV). Serine 175 is modified (phosphoserine).

It is found in the membrane. This is Transmembrane protein 238 (TMEM238) from Homo sapiens (Human).